Consider the following 336-residue polypeptide: tRNA N6-adenosine threonylcarbamoyltransferase (336 aa).

Residues H108 and H112 each contribute to the Fe cation site. Substrate is bound by residues 129–133, D161, E178, and S258; that span reads LISGG. Residue D286 coordinates Fe cation.

It belongs to the KAE1 / TsaD family. Fe(2+) serves as cofactor.

The protein resides in the cytoplasm. It carries out the reaction L-threonylcarbamoyladenylate + adenosine(37) in tRNA = N(6)-L-threonylcarbamoyladenosine(37) in tRNA + AMP + H(+). Required for the formation of a threonylcarbamoyl group on adenosine at position 37 (t(6)A37) in tRNAs that read codons beginning with adenine. Is probably involved in the transfer of the threonylcarbamoyl moiety of threonylcarbamoyl-AMP (TC-AMP) to the N6 group of A37. The polypeptide is tRNA N6-adenosine threonylcarbamoyltransferase (Pyrobaculum neutrophilum (strain DSM 2338 / JCM 9278 / NBRC 100436 / V24Sta) (Thermoproteus neutrophilus)).